The following is a 398-amino-acid chain: Subtilisin-like protease CPC735_015300 (398 aa).

The first 19 residues, methionine 1–alanine 19, serve as a signal peptide directing secretion. Positions alanine 20–threonine 116 are excised as a propeptide. Positions glutamine 35–leucine 115 constitute an Inhibitor I9 domain. In terms of domain architecture, Peptidase S8 spans threonine 126–glutamine 398. Residues aspartate 158 and histidine 189 each act as charge relay system in the active site. Asparagine 250 carries an N-linked (GlcNAc...) asparagine glycan. The Charge relay system role is filled by serine 344. A glycan (N-linked (GlcNAc...) asparagine) is linked at asparagine 362.

It belongs to the peptidase S8 family.

It localises to the secreted. Functionally, secreted subtilisin-like serine protease with keratinolytic activity that contributes to pathogenicity. This chain is Subtilisin-like protease CPC735_015300, found in Coccidioides posadasii (strain C735) (Valley fever fungus).